A 181-amino-acid polypeptide reads, in one-letter code: Inner membrane-spanning protein YciB (181 aa).

5 consecutive transmembrane segments (helical) span residues 3–23 (FLFD…YGIY), 49–69 (TMLW…LILQ), 76–96 (WKPS…QAIF), 119–139 (VNAS…YVAF), and 149–169 (FKLF…GLML).

The protein belongs to the YciB family.

The protein localises to the cell inner membrane. Functionally, plays a role in cell envelope biogenesis, maintenance of cell envelope integrity and membrane homeostasis. In Nitrosospira multiformis (strain ATCC 25196 / NCIMB 11849 / C 71), this protein is Inner membrane-spanning protein YciB.